The primary structure comprises 301 residues: Glycine--tRNA ligase alpha subunit (301 aa).

The protein belongs to the class-II aminoacyl-tRNA synthetase family. In terms of assembly, tetramer of two alpha and two beta subunits.

It localises to the cytoplasm. The enzyme catalyses tRNA(Gly) + glycine + ATP = glycyl-tRNA(Gly) + AMP + diphosphate. This is Glycine--tRNA ligase alpha subunit from Shewanella denitrificans (strain OS217 / ATCC BAA-1090 / DSM 15013).